The chain runs to 518 residues: MPPRFNDSWYYPDDIAHDLDGVEGLSEALKQEAYACAWEYTRCVIPQYTNWDRYVAFMRTIIIGIIAEFRGELVDVAASDSIMGCYSLSAVLDALFEGTPGRELMVREYKTFLLVTSEKTSKRRDSELFRRYVNGLAASPRSWFRMRDCDALARFSLAAALACNDMYDVFPTDEQFELLTEIGDTLYDAVAFYKHRSEGETNNTFAYVPADMRIQAFRVAREMLWALDVAYAHKPEGAILVNFIRFFGGPIHMMMRRYRFVEEDLTVGKPETAAVVAETRRNFKLWNRVDAQVAAPGQTSSDNSSDNRSSSISSTSSTGTDGSGAGDASSVHSSGVHSDATSIEPEKEDQSSVFEAPGADRFRSLLARSKELMFPELRAYLSRSGEPHCNRCLYRSSYGAQQIHRFGGVELCRGCRAMWRGYVESLPERVQEAFPDVVLKAPPPPSPRRAVPADGEADSAAGQRSKRLREDLTAAGEYTTVAETVPAEDVPRSAPDIMEDVLQAECAIDDMRSAVAVF.

2 disordered regions span residues 294–355 and 440–466; these read AAPG…SVFE and KAPPPPSPRRAVPADGEADSAAGQRSK. The segment covering 299-339 has biased composition (low complexity); the sequence is TSSDNSSDNRSSSISSTSSTGTDGSGAGDASSVHSSGVHSD.

This sequence belongs to the alpha-ionylideneethane synthase family.

It functions in the pathway hormone biosynthesis. In terms of biological role, alpha-ionylideneethane synthase involved in the biosynthesis of abscisic acid (ABA), a phytohormone that acts antagonistically toward salicylic acid (SA), jasmonic acid (JA) and ethylene (ETH) signaling, to impede plant defense responses. During pathogen-host interaction, ABA plays a dual role in disease severity by increasing plant susceptibility and accelerating pathogenesis in the fungus itself. The first step of the pathway catalyzes the reaction from farnesyl diphosphate to alpha-ionylideneethane performed by the alpha-ionylideneethane synthase ABA3 via a three-step reaction mechanism involving 2 neutral intermediates, beta-farnesene and allofarnesene. The cytochrome P450 monooxygenase ABA1 might then be involved in the conversion of alpha-ionylideneethane to alpha-ionylideneacetic acid. Alpha-ionylideneacetic acid is further converted to abscisic acid in 2 steps involving the cytochrome P450 monooxygenase ABA2 and the short-chain dehydrogenase/reductase ABA4, via the intermediates 1'-deoxy-ABA or 1',4'-trans-diol-ABA, depending on the order of action of these 2 enzymes. ABA2 is responsible for the hydroxylation of carbon atom C-1' and ABA4 might be involved in the oxidation of the C-4' carbon atom. The protein is Alpha-ionylideneethane synthase abl3 of Pyricularia oryzae (strain Y34) (Rice blast fungus).